Consider the following 303-residue polypeptide: Thioesterase poxG (303 aa).

The protein belongs to the lcsJ thioesterase family.

The protein operates within secondary metabolite biosynthesis. Functionally, thioesterase; part of the gene cluster that mediates the biosynthesis of oxaleimides, cytotoxic compounds containing an unusual disubstituted succinimide moiety. The first step of the pathway is provided by the HR-PKS poxF that serves in a new mode of collaborative biosynthesis with the PKS-NRPS poxE, by providing the olefin containing amino acid substrate via the synthesis of an ACP-bound dec-4-enoate. The cytochrome P450 monooxygenase poxM-catalyzed oxidation at the alpha-position creates the enzyme-bound 2-hydroxydec-4-enoyl-ACP thioester, which may be prone to spontaneous hydrolysis to yield 2-hydroxydec-4-enoic acid due to increased electrophilicity of the carbonyl. 2-hydroxydec-4-enoic acid can then be further oxidized by poxM to yield the alpha-ketoacid 2-oxodec-4-enoicacid, which is reductively aminated by the aminotransferase poxL to yield (S,E)-2-aminodec-4-enoic acid. The Hybrid PKS-NRPS synthetase poxE then performs condensation between the octaketide product of its PKS modules and the amino group of (S,E)-2-aminodec-4-enoic acid which is activated and incorporated by the adenylation domain. The resulting aminoacyl product can be cyclized by the Diels-Alderase PoxQ and reductively released by the reductive (R) domain of poxE to yield an aldehyde intermediate. The released aldehyde is then substrate for a Knoevenagel condensation by the hydrolyase poxO followed by an oxidation at the 5-position of the pyrrolidone ring. The presence of the olefin from the amino acid building block allows for migration of the substituted allyl group to occur. This allylic transposition reaction takes place in a conjugate addition, semipinacol-like fashion to yield a succinimide intermediate. Iterative two-electron oxidations of the C7 methyl of the succinimide intermediate to the carboxylic acid can be catalyzed by one of two remaining cytochrome P450 monooxygenasess poxC or poxD to yield oxaleimide A. Subsequent oxidation yields the maleimide scaffold oxaleimide I. Both oxaleimide A and oxaleimide I can undergo oxidative modifications in the decalin ring to yield the series of products oxaleimides B to H. The protein is Thioesterase poxG of Penicillium oxalicum (strain 114-2 / CGMCC 5302) (Penicillium decumbens).